Consider the following 200-residue polypeptide: Protein GrpE (200 aa).

Polar residues predominate over residues 1 to 11 (MSNQTNKAQDN). The disordered stretch occupies residues 1 to 29 (MSNQTNKAQDNQVEEIVEGELLNENGTEA).

It belongs to the GrpE family. Homodimer.

The protein resides in the cytoplasm. Its function is as follows. Participates actively in the response to hyperosmotic and heat shock by preventing the aggregation of stress-denatured proteins, in association with DnaK and GrpE. It is the nucleotide exchange factor for DnaK and may function as a thermosensor. Unfolded proteins bind initially to DnaJ; upon interaction with the DnaJ-bound protein, DnaK hydrolyzes its bound ATP, resulting in the formation of a stable complex. GrpE releases ADP from DnaK; ATP binding to DnaK triggers the release of the substrate protein, thus completing the reaction cycle. Several rounds of ATP-dependent interactions between DnaJ, DnaK and GrpE are required for fully efficient folding. This chain is Protein GrpE, found in Shewanella halifaxensis (strain HAW-EB4).